Here is a 364-residue protein sequence, read N- to C-terminus: Pectinesterase 1 (364 aa).

A signal peptide spans 1 to 22; it reads MSCIAVEAVLLGILLYIPIVLS. Asparagine 103 carries N-linked (GlcNAc...) asparagine glycosylation. The active site involves aspartate 220.

The protein belongs to the pectinesterase family. In terms of processing, glycosylated. As to expression, expressed in pollen.

Its subcellular location is the secreted. The catalysed reaction is [(1-&gt;4)-alpha-D-galacturonosyl methyl ester](n) + n H2O = [(1-&gt;4)-alpha-D-galacturonosyl](n) + n methanol + n H(+). It functions in the pathway glycan metabolism; pectin degradation; 2-dehydro-3-deoxy-D-gluconate from pectin: step 1/5. Catalyzes the demethylesterification of homogalacturonan components of pectin. May be involved in pollen tube development. The protein is Pectinesterase 1 of Olea europaea (Common olive).